The chain runs to 632 residues: Serine/threonine-protein kinase plk-2 (632 aa).

The segment at 1–26 (MQRVQPSAARVKSQKKEKAPPDVPDV) is disordered. One can recognise a Protein kinase domain in the interval 36–287 (YEKGKFLGKG…ARAVCRDHFF (252 aa)). ATP-binding positions include 42–50 (LGKGGFAHC) and Lys-65. The active-site Proton acceptor is Asp-159. The disordered stretch occupies residues 313–334 (AEENVSPSGTIDQRGPHQAGRS). POLO box domains follow at residues 405–484 (WISK…YMND) and 506–588 (TLRV…RLVE).

Belongs to the protein kinase superfamily. Ser/Thr protein kinase family. CDC5/Polo subfamily. As to quaternary structure, interacts (via POLO box domain) with mex-5 and mex-6. Interacts (via POLO box domain) with him-8 (via N-terminus); the interaction mediates plk-2 recruitment to the pairing region of X chromosomes during meiosis. Interacts with sun-1. May interact with nicotinic acetylcholine receptor. Requires Mg(2+) as cofactor. As to expression, expressed in oocytes.

The protein localises to the nucleus. It localises to the cytoplasm. Its subcellular location is the cytoskeleton. The protein resides in the microtubule organizing center. It is found in the centrosome. The protein localises to the chromosome. It localises to the centromere. Its subcellular location is the kinetochore. The catalysed reaction is L-seryl-[protein] + ATP = O-phospho-L-seryl-[protein] + ADP + H(+). It carries out the reaction L-threonyl-[protein] + ATP = O-phospho-L-threonyl-[protein] + ADP + H(+). Its function is as follows. Serine/threonine-protein kinase which plays a role, during oogenesis, in chromosome pairing and synapsis, by facilitating the recruitment and attachment of meiotic chromosomes to the nuclear envelope during prophase. Promotes the localization of brc-1 to the short arm of homologous chromosomes during meiotic prophase I. Regulates the formation of sun-1 patches along the nuclear envelope. Promotes meiotic nuclei apoptosis in response to chromosomal asynapsis. Plays a redundant role with plk-1 in the establishment of cell polarity downstream of mex-5 and mex-6 during the first embryonic cell divisions. Plays a role in nicotinic acetylcholine receptor-mediated sensitivity to nicotine but not levamisole. Regulates motility. The sequence is that of Serine/threonine-protein kinase plk-2 from Caenorhabditis elegans.